We begin with the raw amino-acid sequence, 541 residues long: Eukaryotic translation initiation factor 3 subunit L (541 aa).

The 209-residue stretch at 308–516 folds into the PCI domain; that stretch reads TFSDILLYIQ…IHIADTKVSH (209 aa).

It belongs to the eIF-3 subunit L family. As to quaternary structure, component of the eukaryotic translation initiation factor 3 (eIF-3) complex. The eIF-3 complex interacts with pix.

It is found in the cytoplasm. Component of the eukaryotic translation initiation factor 3 (eIF-3) complex, which is involved in protein synthesis of a specialized repertoire of mRNAs and, together with other initiation factors, stimulates binding of mRNA and methionyl-tRNAi to the 40S ribosome. The eIF-3 complex specifically targets and initiates translation of a subset of mRNAs involved in cell proliferation. In Drosophila pseudoobscura pseudoobscura (Fruit fly), this protein is Eukaryotic translation initiation factor 3 subunit L.